A 455-amino-acid polypeptide reads, in one-letter code: Argininosuccinate lyase (455 aa).

This sequence belongs to the lyase 1 family. Argininosuccinate lyase subfamily.

It is found in the cytoplasm. The enzyme catalyses 2-(N(omega)-L-arginino)succinate = fumarate + L-arginine. It participates in amino-acid biosynthesis; L-arginine biosynthesis; L-arginine from L-ornithine and carbamoyl phosphate: step 3/3. The protein is Argininosuccinate lyase of Shewanella halifaxensis (strain HAW-EB4).